Reading from the N-terminus, the 344-residue chain is D-amino-acid oxidase (344 aa).

Ala-11, Ser-14, Ser-49, Gly-53, Asn-55, and Ile-167 together coordinate FAD. (R)-lactate-binding residues include Tyr-229 and Arg-290. Residues Tyr-229 and Arg-290 each contribute to the anthranilate site. FAD is bound by residues Arg-290, Ser-321, Gly-324, Tyr-325, and Gln-326.

This sequence belongs to the DAMOX/DASOX family. Requires FAD as cofactor.

The protein resides in the peroxisome. It carries out the reaction a D-alpha-amino acid + O2 + H2O = a 2-oxocarboxylate + H2O2 + NH4(+). The enzyme catalyses D-alanine + O2 + H2O = pyruvate + H2O2 + NH4(+). In terms of biological role, catalyzes the oxidative deamination of D-amino acids with broad substrate specificity. Enables the organism to utilize D-amino acids as a source of nutrients. Enables the organism to utilize D-alanine as a source of nitrogen. The sequence is that of D-amino-acid oxidase from Komagataella phaffii (strain GS115 / ATCC 20864) (Yeast).